The sequence spans 254 residues: MYFAVISIFPEMFATIREFGITGRAVTQKQVTIECINPRDFTSDNYRRIDERPYGGGPGMVMMAEPLSQAIEDARLRASQHGCRVDKAHCPVIYMSPQGQTLSESSVVDMTEYDGMIILCGRYEGIDERLLSQYVDMEISLGDYVLTGGELPAMVLMDSVIRRLPDIMGDDKSAEQDSFVDGLLDCPHYTKPHEFAGMAVPEVLLSGHHANIAKWRFSQQVERTQARRPDLWQAFTPTVEQAKWLKALAKADKK.

S-adenosyl-L-methionine contacts are provided by residues G121 and 141–146 (LGDYVL).

Belongs to the RNA methyltransferase TrmD family. As to quaternary structure, homodimer.

It is found in the cytoplasm. It catalyses the reaction guanosine(37) in tRNA + S-adenosyl-L-methionine = N(1)-methylguanosine(37) in tRNA + S-adenosyl-L-homocysteine + H(+). Specifically methylates guanosine-37 in various tRNAs. This Psychrobacter cryohalolentis (strain ATCC BAA-1226 / DSM 17306 / VKM B-2378 / K5) protein is tRNA (guanine-N(1)-)-methyltransferase.